Here is a 669-residue protein sequence, read N- to C-terminus: Epithelial sodium channel subunit alpha (669 aa).

The interval 1-43 (MEGNKLEEQDSSPPQSTPGLMKGNKREEQGLGPEPAAPQQPTA) is disordered. The Cytoplasmic portion of the chain corresponds to 1 to 85 (MEGNKLEEQD…CSQHNRMKTA (85 aa)). Positions 33–42 (PEPAAPQQPT) are enriched in low complexity. Residues 86–106 (FWAVLWLCTFGMMYWQFGLLF) form a helical membrane-spanning segment. Topologically, residues 107 to 562 (GEYFSYPVSL…SQWSLWFGSS (456 aa)) are extracellular. 10 disulfides stabilise this stretch: Cys133-Cys305, Cys229-Cys236, Cys282-Cys289, Cys394-Cys479, Cys416-Cys456, Cys416-Cys475, Cys420-Cys471, Cys429-Cys456, Cys429-Cys479, and Cys431-Cys445. The interval 175-243 (RSRRDLRGTL…SDCFYQTYSS (69 aa)) is gating release of inhibition by proteolysis (GRIP); protease-sensitive region that is responsible for the proteolytic activation of the channel. The helical transmembrane segment at 563 to 583 (VLSVVEMAELVFDLLVIMFLM) threads the bilayer. The Cytoplasmic segment spans residues 584-669 (LLRRFRSRYW…SSSTCPLGGP (86 aa)). The segment at 620-669 (HPMSLSLSQPGPAPSPALTAPPPAYATLGPRPSPGGSAGASSSTCPLGGP) is disordered. Over residues 630–643 (GPAPSPALTAPPPA) the composition is skewed to pro residues. Residues 640 to 644 (PPPAY) carry the PY motif; recruits WW domain-containing proteins and is thereby required for ubiquitination and inhibition of the channel by NEDD4 and NEDD4L motif.

It belongs to the amiloride-sensitive sodium channel (TC 1.A.6) family. SCNN1A subfamily. Heterotrimer; containing an alpha/SCNN1A, a beta/SCNN1B and a gamma/SCNN1G subunit. Interacts with WWP1 (via WW domains). Interacts with WWP2 (via WW domains); inhibits the channel. Interacts with BPIFA1; the interaction is indirect via SCNN1B and inhibits the proteolytic processing of SCNN1A and SCNN1G and the activation of ENaC. Interacts with the full-length immature form of PCSK9 (pro-PCSK9); inhibits ENaC by promoting its proteasomal degradation. Ubiquitinated. Can be ubiquitinated at multiple sites and undergo monoubiquitination and polyubiquitination. Ubiquitination by NEDD4 or NEDD4L inhibits the ENaC channel through endocytosis, intracellular retention and degradation of its individual subunits. In terms of processing, ENaC is activated through the proteolytic maturation of its subunits. Furin cleaves the SCNN1A subunit, which results in a stepwise increase in the open probability of the channel due to the release of an inhibitory tract. BPIFA1, which is recruited by the SCNN1B subunit, prevents the proteolytic activation of ENaC. Post-translationally, N-glycosylated. Expressed in the female reproductive tract, from the fimbrial end of the fallopian tube to the endometrium (at protein level). Expressed in kidney (at protein level). In the respiratory tract, expressed in the bronchial epithelium (at protein level). Highly expressed in lung. Detected at intermediate levels in pancreas and liver, and at low levels in heart and placenta. in skin, expressed in keratinocytes, melanocytes and Merkel cells of the epidermal sub-layers, stratum basale, stratum spinosum and stratum granulosum (at protein level). Expressed in the outer root sheath of the hair follicles (at protein level). Detected in both peripheral and central cells of the sebaceous gland (at protein level). Expressed by eccrine sweat glands (at protein level). In skin, also expressed by arrector pili muscle cells and intradermal adipocytes. Isoform 1 and isoform 2 predominate in all tissues. In terms of tissue distribution, detected in lung and heart.

The protein resides in the apical cell membrane. Its subcellular location is the cell projection. The protein localises to the cilium. It is found in the cytoplasmic granule. It localises to the cytoplasm. The protein resides in the cytoplasmic vesicle. Its subcellular location is the secretory vesicle. The protein localises to the acrosome. It is found in the flagellum. It carries out the reaction Na(+)(in) = Na(+)(out). Originally identified and characterized by its inhibition by the diuretic drug amiloride. Inhibited by phenamil. Functionally, this is one of the three pore-forming subunits of the heterotrimeric epithelial sodium channel (ENaC), a critical regulator of sodium balance and fluid homeostasis. ENaC operates in epithelial tissues, where it mediates the electrodiffusion of sodium ions from extracellular fluid through the apical membrane of cells, with water following osmotically. It plays a key role in maintaining sodium homeostasis through electrogenic sodium reabsorption in the kidneys. Additionally, ENaC is essential for airway surface liquid homeostasis, which is crucial for proper mucus clearance. In terms of biological role, not functional. This Homo sapiens (Human) protein is Epithelial sodium channel subunit alpha.